The chain runs to 224 residues: Cardosin-E (224 aa).

Residues 1 to 221 (DSGSAIVALT…DYGNLLVGFA (221 aa)) enclose the Peptidase A1 domain. Asp35 is a catalytic residue. Cys125 and Cys129 are disulfide-bonded. The active site involves Asp134.

It belongs to the peptidase A1 family. Heterodimer of a light chain and a heavy chain. An intermediate form is produced first, and undergoes proteolytic processing to remove the internal plant-specific insert (PSI) and the propeptide. N-glycosylated. Pistils.

The protein localises to the microsome membrane. Its subcellular location is the protein storage vacuole. The protein resides in the secreted. It localises to the cell wall. It is found in the extracellular space. The protein localises to the extracellular matrix. With respect to regulation, inhibited by pepstatin. Aspartic protease with a high preference for bonds between hydrophobic residues. The protein is Cardosin-E of Cynara cardunculus (Cardoon).